Reading from the N-terminus, the 506-residue chain is Maturase K (506 aa).

This sequence belongs to the intron maturase 2 family. MatK subfamily.

Its subcellular location is the plastid. The protein resides in the chloroplast. In terms of biological role, usually encoded in the trnK tRNA gene intron. Probably assists in splicing its own and other chloroplast group II introns. The sequence is that of Maturase K from Prunus persica (Peach).